Here is a 400-residue protein sequence, read N- to C-terminus: Tektin-B1 (400 aa).

3 coiled-coil regions span residues 35–81, 236–294, and 310–353; these read TRLS…AKAL, FALR…LENR, and GLVN…LELK.

The protein belongs to the tektin family. May form a heterodimer with tektin a or exist as a homodimer. Cilia and flagella.

The protein localises to the cytoplasm. It localises to the cytoskeleton. Structural component of ciliary and flagellar microtubules. The polypeptide is Tektin-B1 (Strongylocentrotus purpuratus (Purple sea urchin)).